The sequence spans 267 residues: Soluble interferon gamma receptor OPG193 (267 aa).

Residues 1–17 (MRYIIILAVLFINSIHA) form the signal peptide. N-linked (GlcNAc...) asparagine; by host glycans are attached at residues asparagine 42 and asparagine 150.

The protein belongs to the type II cytokine receptor family. As to quaternary structure, homodimer. Interacts with host IFNG.

It localises to the secreted. Its function is as follows. Counteracts the antiviral effects of host IFN-gamma. Acts as a soluble IFN-gamma receptor and thus inhibits the interaction between host IFN-gamma and its receptor. In Cynomys gunnisoni (Gunnison's prairie dog), this protein is Soluble interferon gamma receptor OPG193 (OPG193).